A 495-amino-acid polypeptide reads, in one-letter code: ATP synthase subunit beta (495 aa).

ATP is bound at residue 178–185 (GGAGVGKT).

Belongs to the ATPase alpha/beta chains family. In terms of assembly, F-type ATPases have 2 components, CF(1) - the catalytic core - and CF(0) - the membrane proton channel. CF(1) has five subunits: alpha(3), beta(3), gamma(1), delta(1), epsilon(1). CF(0) has three main subunits: a(1), b(2) and c(9-12). The alpha and beta chains form an alternating ring which encloses part of the gamma chain. CF(1) is attached to CF(0) by a central stalk formed by the gamma and epsilon chains, while a peripheral stalk is formed by the delta and b chains.

The protein localises to the cell membrane. The catalysed reaction is ATP + H2O + 4 H(+)(in) = ADP + phosphate + 5 H(+)(out). In terms of biological role, produces ATP from ADP in the presence of a proton gradient across the membrane. The catalytic sites are hosted primarily by the beta subunits. This is ATP synthase subunit beta from Bifidobacterium animalis subsp. lactis (strain AD011).